Consider the following 317-residue polypeptide: MPVQGSQRRLLGSLNSTPTATPHLGLAANQTGARCLEVSVPDGLFLSLGLVSLVENVLVVTAIAKNRNLHSPMYCFICCLALSDLLVSGSNMLETAVTLLLEAGALAARAAVVQQLDNVIDVITCSSMLSSLCFLGAIAVDRYISIFYALRYHSIVTLPRARRAVAAIWVASVLFSTLFIAYYDHAAVLLCLVIFFLAMLVLMAVLYVHMLARACQHAQGIARLHKRQRLAHQGFGLKGAATLTILLGIFFLCWGPFFLHLTLIVLCPQHPTCSCIFKNFNLFLALIICNAIIDPLIYAFRSQELRRTLKEVLLCSW.

Residues 1–37 are Extracellular-facing; it reads MPVQGSQRRLLGSLNSTPTATPHLGLAANQTGARCLE. An N-linked (GlcNAc...) asparagine glycan is attached at asparagine 29. The chain crosses the membrane as a helical span at residues 38–63; that stretch reads VSVPDGLFLSLGLVSLVENVLVVTAI. Residues 64–72 are Cytoplasmic-facing; it reads AKNRNLHSP. A helical membrane pass occupies residues 73–93; that stretch reads MYCFICCLALSDLLVSGSNML. Residues 94-118 lie on the Extracellular side of the membrane; that stretch reads ETAVTLLLEAGALAARAAVVQQLDN. The helical transmembrane segment at 119 to 140 threads the bilayer; the sequence is VIDVITCSSMLSSLCFLGAIAV. The Cytoplasmic segment spans residues 141–163; it reads DRYISIFYALRYHSIVTLPRARR. The helical transmembrane segment at 164 to 183 threads the bilayer; it reads AVAAIWVASVLFSTLFIAYY. The Extracellular segment spans residues 184–191; it reads DHAAVLLC. Residues 192–211 traverse the membrane as a helical segment; it reads LVIFFLAMLVLMAVLYVHML. At 212–240 the chain is on the cytoplasmic side; sequence ARACQHAQGIARLHKRQRLAHQGFGLKGA. The helical transmembrane segment at 241 to 266 threads the bilayer; that stretch reads ATLTILLGIFFLCWGPFFLHLTLIVL. The Extracellular portion of the chain corresponds to 267–279; that stretch reads CPQHPTCSCIFKN. A helical membrane pass occupies residues 280 to 300; that stretch reads FNLFLALIICNAIIDPLIYAF. Topologically, residues 301-317 are cytoplasmic; sequence RSQELRRTLKEVLLCSW. Cysteine 315 carries the S-palmitoyl cysteine lipid modification.

It belongs to the G-protein coupled receptor 1 family. Interacts with MGRN1, but does not undergo MGRN1-mediated ubiquitination; this interaction competes with GNAS-binding and thus inhibits agonist-induced cAMP production. Interacts with OPN3; the interaction results in a decrease in MC1R-mediated cAMP signaling and ultimately a decrease in melanin production in melanocytes.

The protein resides in the cell membrane. Its function is as follows. Receptor for MSH (alpha, beta and gamma) and ACTH. The activity of this receptor is mediated by G proteins which activate adenylate cyclase. Mediates melanogenesis, the production of eumelanin (black/brown) and phaeomelanin (red/yellow), via regulation of cAMP signaling in melanocytes. The polypeptide is Melanocyte-stimulating hormone receptor (MC1R) (Papio hamadryas (Hamadryas baboon)).